Reading from the N-terminus, the 473-residue chain is 1-deoxy-D-xylulose 5-phosphate reductoisomerase, chloroplastic (473 aa).

The N-terminal 49 residues, methionine 1 to cysteine 49, are a transit peptide targeting the chloroplast. 7 residues coordinate NADPH: threonine 85, glycine 86, serine 87, isoleucine 88, glycine 111, asparagine 113, and asparagine 199. 1-deoxy-D-xylulose 5-phosphate is bound at residue lysine 200. Glutamate 201 is a binding site for NADPH. Aspartate 225 is a Mn(2+) binding site. 1-deoxy-D-xylulose 5-phosphate-binding residues include serine 226, glutamate 227, serine 251, and histidine 274. Residue glutamate 227 participates in Mn(2+) binding. Glycine 280 contributes to the NADPH binding site. Serine 287, asparagine 292, lysine 293, and glutamate 296 together coordinate 1-deoxy-D-xylulose 5-phosphate. Glutamate 296 contacts Mn(2+).

This sequence belongs to the DXR family. Requires Mn(2+) as cofactor. The cofactor is Mg(2+).

The protein localises to the plastid. The protein resides in the chloroplast stroma. It carries out the reaction 2-C-methyl-D-erythritol 4-phosphate + NADP(+) = 1-deoxy-D-xylulose 5-phosphate + NADPH + H(+). It functions in the pathway isoprenoid biosynthesis; isopentenyl diphosphate biosynthesis via DXP pathway; isopentenyl diphosphate from 1-deoxy-D-xylulose 5-phosphate: step 1/6. Functionally, enzyme of the plastid non-mevalonate pathway for isoprenoid biosynthesis that catalyzes the NADPH-dependent rearrangement and reduction of 1-deoxy-D-xylulose-5-phosphate (DXP) to 2-C-methyl-D-erythritol 4-phosphate (MEP). Required for chloroplast development. The sequence is that of 1-deoxy-D-xylulose 5-phosphate reductoisomerase, chloroplastic (DXR) from Oryza sativa subsp. japonica (Rice).